A 355-amino-acid polypeptide reads, in one-letter code: Uroporphyrinogen decarboxylase (355 aa).

Residues 38 to 42 (RQAGR), Asp87, Tyr162, Ser217, and His331 each bind substrate.

The protein belongs to the uroporphyrinogen decarboxylase family. In terms of assembly, homodimer.

It localises to the cytoplasm. The catalysed reaction is uroporphyrinogen III + 4 H(+) = coproporphyrinogen III + 4 CO2. It functions in the pathway porphyrin-containing compound metabolism; protoporphyrin-IX biosynthesis; coproporphyrinogen-III from 5-aminolevulinate: step 4/4. Catalyzes the decarboxylation of four acetate groups of uroporphyrinogen-III to yield coproporphyrinogen-III. The polypeptide is Uroporphyrinogen decarboxylase (Streptomyces coelicolor (strain ATCC BAA-471 / A3(2) / M145)).